The chain runs to 135 residues: Mediator of RNA polymerase II transcription subunit 10 (135 aa).

The protein belongs to the Mediator complex subunit 10 family. In terms of assembly, component of the Mediator complex, which is composed of MED1, MED4, MED6, MED7, MED8, MED9, MED10, MED11, MED12, MED13, MED13L, MED14, MED15, MED16, MED17, MED18, MED19, MED20, MED21, MED22, MED23, MED24, MED25, MED26, MED27, MED29, MED30, MED31, CCNC, CDK8 and CDC2L6/CDK11. The MED12, MED13, CCNC and CDK8 subunits form a distinct module termed the CDK8 module. Mediator containing the CDK8 module is less active than Mediator lacking this module in supporting transcriptional activation. Individual preparations of the Mediator complex lacking one or more distinct subunits have been variously termed ARC, CRSP, DRIP, PC2, SMCC and TRAP.

Its subcellular location is the nucleus. Component of the Mediator complex, a coactivator involved in the regulated transcription of nearly all RNA polymerase II-dependent genes. Mediator functions as a bridge to convey information from gene-specific regulatory proteins to the basal RNA polymerase II transcription machinery. Mediator is recruited to promoters by direct interactions with regulatory proteins and serves as a scaffold for the assembly of a functional preinitiation complex with RNA polymerase II and the general transcription factors. The polypeptide is Mediator of RNA polymerase II transcription subunit 10 (Med10) (Mus musculus (Mouse)).